Consider the following 432-residue polypeptide: Glutamyl-tRNA reductase (432 aa).

Substrate is bound by residues 50–53 (TCNR), S110, 115–117 (ETQ), and Q121. The active-site Nucleophile is the C51. 190-195 (GAGEMG) contributes to the NADP(+) binding site.

The protein belongs to the glutamyl-tRNA reductase family. In terms of assembly, homodimer.

It carries out the reaction (S)-4-amino-5-oxopentanoate + tRNA(Glu) + NADP(+) = L-glutamyl-tRNA(Glu) + NADPH + H(+). The protein operates within porphyrin-containing compound metabolism; protoporphyrin-IX biosynthesis; 5-aminolevulinate from L-glutamyl-tRNA(Glu): step 1/2. Its function is as follows. Catalyzes the NADPH-dependent reduction of glutamyl-tRNA(Glu) to glutamate 1-semialdehyde (GSA). This is Glutamyl-tRNA reductase from Nitratiruptor sp. (strain SB155-2).